Here is a 479-residue protein sequence, read N- to C-terminus: MAEDKKLVEAITSMKEDFAQWYTDVCKKAELMSYSSVKGCMIFKPAGYAIWENIKNEMDRRFKETGVENVYLPMFIPESLLEVEKDHVEGFAPEVAWVTYGGLNPLQERMCVRPTSETLFCDFYKDEIQSYRDLPKVYNQWCSVVRWEKETRPFLRSREFLWQEGHTAHATAEEAEARTQQMLNLYADFCEEVLAIPVIKGRKTDKEKFAGAEATYTIEALMHDGKALQSGTSHNFGDGFAKAFGIQYTDKDNKLKYVHQTSWGTTTRLIGAVIMTHGDDSGLVLPPKVAPVQVDVIPIMQKKAGVLDKAYEVGQALKAAGLRVKVDDSDKNPGWKFSEQEMRGIPVRVEMGPRDIEANQAVIVRRDTREKITVSIDELADRIPEILDTIQKDMLERARAHREAHTYTALNYDEFKDTAANKAGFIKAMWCGDQACEDKIKEDTTCTSRCMPFAQEKLSDVCVCCGKPAKAMVYWGKAY.

Belongs to the class-II aminoacyl-tRNA synthetase family. ProS type 3 subfamily. As to quaternary structure, homodimer.

It is found in the cytoplasm. It catalyses the reaction tRNA(Pro) + L-proline + ATP = L-prolyl-tRNA(Pro) + AMP + diphosphate. Functionally, catalyzes the attachment of proline to tRNA(Pro) in a two-step reaction: proline is first activated by ATP to form Pro-AMP and then transferred to the acceptor end of tRNA(Pro). The protein is Proline--tRNA ligase of Lachnospira eligens (strain ATCC 27750 / DSM 3376 / VPI C15-48 / C15-B4) (Eubacterium eligens).